We begin with the raw amino-acid sequence, 31 residues long: Chassatide C6 (31 aa).

The cyclopeptide (Gly-Asn) cross-link spans 1–31 (GVIPCGESCVFIPCISSVIGCSCKNKVCYRN). 3 disulfide bridges follow: C5–C21, C9–C23, and C14–C28.

In terms of processing, this is a cyclic peptide. In terms of tissue distribution, expressed in fruit, pedicel, root and stem but not in leaf (at protein level).

In terms of biological role, probably participates in a plant defense mechanism. This is Chassatide C6 from Chassalia chartacea (Chassalia curviflora).